Here is a 146-residue protein sequence, read N- to C-terminus: Large ribosomal subunit protein bL21 (146 aa).

The segment at 96–146 (KKKTRRKMGHRQELTRVMVKSISITNSTPKTSSKTEVKKKSTSPKASNPEN) is disordered.

It belongs to the bacterial ribosomal protein bL21 family. Part of the 50S ribosomal subunit. Contacts protein L20.

In terms of biological role, this protein binds to 23S rRNA in the presence of protein L20. The protein is Large ribosomal subunit protein bL21 of Prochlorococcus marinus subsp. pastoris (strain CCMP1986 / NIES-2087 / MED4).